Reading from the N-terminus, the 161-residue chain is UPF0262 protein Meso_0189 (161 aa).

This sequence belongs to the UPF0262 family.

This chain is UPF0262 protein Meso_0189, found in Chelativorans sp. (strain BNC1).